A 561-amino-acid polypeptide reads, in one-letter code: Nephronectin (561 aa).

The N-terminal stretch at M1–A19 is a signal peptide. An EGF-like 1 domain is found at S52–N87. 6 cysteine pairs are disulfide-bonded: C56–C69, C60–C75, C77–C86, C93–C104, C100–C113, and C115–C127. In terms of domain architecture, EGF-like 2; calcium-binding spans D89 to S128. The EGF-like 3 domain maps to S132–V168. Residues D169–H213 form the EGF-like 4; calcium-binding domain. Intrachain disulfides connect C173–C186, C180–C195, C197–C212, C218–C231, C225–C240, and C242–C253. Residues D214–V254 form the EGF-like 5; calcium-binding domain. A disordered region spans residues P266–V370. Residues T307–T316 show a composition bias toward low complexity. Residues R317 to E348 show a composition bias toward pro residues. Positions T352–R366 are enriched in low complexity. The Integrin interaction signature appears at R382 to D384. One can recognise an MAM domain in the interval H420–C561.

Belongs to the nephronectin family. Homodimer and homotrimer. Expressed in kidney (at protein level).

The protein localises to the secreted. Its subcellular location is the extracellular space. It is found in the extracellular matrix. Functional ligand of integrin alpha-8/beta-1 in kidney development. Regulates the expression of GDNF with integrin alpha-8/beta-1 which is essential for kidney development. May also play a role in the development and function of various tissues, regulating cell adhesion, spreading and survival through the binding of several integrins. The protein is Nephronectin (Npnt) of Mus musculus (Mouse).